Here is a 394-residue protein sequence, read N- to C-terminus: Elongation factor Tu (394 aa).

Residues 10-204 (KPHVNVGTIG…HLDSYIPEPE (195 aa)) form the tr-type G domain. Positions 19-26 (GHVDHGKT) are G1. GTP is bound at residue 19 to 26 (GHVDHGKT). Residue threonine 26 coordinates Mg(2+). The G2 stretch occupies residues 60–64 (GITIN). Positions 81–84 (DCPG) are G3. GTP is bound by residues 81-85 (DCPGH) and 136-139 (NKCD). A G4 region spans residues 136–139 (NKCD). The tract at residues 174–176 (SAL) is G5.

Belongs to the TRAFAC class translation factor GTPase superfamily. Classic translation factor GTPase family. EF-Tu/EF-1A subfamily. As to quaternary structure, monomer.

It is found in the cytoplasm. The catalysed reaction is GTP + H2O = GDP + phosphate + H(+). GTP hydrolase that promotes the GTP-dependent binding of aminoacyl-tRNA to the A-site of ribosomes during protein biosynthesis. The sequence is that of Elongation factor Tu from Cronobacter sakazakii (strain ATCC BAA-894) (Enterobacter sakazakii).